The following is a 725-amino-acid chain: Glyoxysomal fatty acid beta-oxidation multifunctional protein MFP-a (725 aa).

The active-site Nucleophile is E119. The active-site Proton acceptor is the E139. The Microbody targeting signal motif lies at 723–725; the sequence is SRL.

In the N-terminal section; belongs to the enoyl-CoA hydratase/isomerase family. This sequence in the central section; belongs to the 3-hydroxyacyl-CoA dehydrogenase family.

Its subcellular location is the glyoxysome. It catalyses the reaction a (3S)-3-hydroxyacyl-CoA = a (2E)-enoyl-CoA + H2O. The enzyme catalyses a 4-saturated-(3S)-3-hydroxyacyl-CoA = a (3E)-enoyl-CoA + H2O. It carries out the reaction a (3Z)-enoyl-CoA = a 4-saturated (2E)-enoyl-CoA. The catalysed reaction is a (3E)-enoyl-CoA = a 4-saturated (2E)-enoyl-CoA. It catalyses the reaction (3S)-3-hydroxybutanoyl-CoA = (3R)-3-hydroxybutanoyl-CoA. The enzyme catalyses a (3S)-3-hydroxyacyl-CoA + NAD(+) = a 3-oxoacyl-CoA + NADH + H(+). It functions in the pathway lipid metabolism; fatty acid beta-oxidation. This Brassica napus (Rape) protein is Glyoxysomal fatty acid beta-oxidation multifunctional protein MFP-a.